Here is a 500-residue protein sequence, read N- to C-terminus: Maturase K (500 aa).

This sequence belongs to the intron maturase 2 family. MatK subfamily.

It localises to the plastid. The protein localises to the chloroplast. Functionally, usually encoded in the trnK tRNA gene intron. Probably assists in splicing its own and other chloroplast group II introns. This chain is Maturase K, found in Adiantum capillus-veneris (Maidenhair fern).